Here is a 297-residue protein sequence, read N- to C-terminus: Probable tyrosine phosphatase protein J2 (297 aa).

The 266-residue stretch at 21 to 286 (DSLSCIIQEY…VFCYHLIHAY (266 aa)) folds into the Tyrosine-protein phosphatase domain. Residue Cys-227 is the Phosphocysteine intermediate of the active site.

It belongs to the protein-tyrosine phosphatase family.

It catalyses the reaction O-phospho-L-tyrosyl-[protein] + H2O = L-tyrosyl-[protein] + phosphate. This is Probable tyrosine phosphatase protein J2 (J3) from Microplitis demolitor (Parasitoid wasp).